Consider the following 485-residue polypeptide: uncharacterized protein (485 aa).

A signal peptide spans 1–23; the sequence is MRRRVCTVVRAVVCLLSTSLLTT. Cys-24 carries N-palmitoyl cysteine lipidation. Residue Cys-24 is the site of S-diacylglycerol cysteine attachment. Residues 308-327 are compositionally biased toward low complexity; sequence SAASSPAQCPSSPSSSSSSS. The interval 308 to 331 is disordered; it reads SAASSPAQCPSSPSSSSSSSTNAG.

It belongs to the TP013X lipoprotein family.

It localises to the cell membrane. This is an uncharacterized protein from Treponema pallidum (strain Nichols).